Consider the following 32-residue polypeptide: MSDIN-like toxin proprotein a (32 aa).

A propeptide spanning residues 1 to 10 (MSDINATRLP) is cleaved from the precursor. A cross-link (cyclopeptide (Ile-Pro)) is located at residues 11–18 (IIGILLPP). Positions 19–32 (CIGDDVTLLLTRGE) are excised as a propeptide.

This sequence belongs to the MSDIN fungal toxin family. Post-translationally, processed by the macrocyclase-peptidase enzyme POPB to yield a toxic cyclic octapeptide. POPB first removes 10 residues from the N-terminus. Conformational trapping of the remaining peptide forces the enzyme to release this intermediate rather than proceed to macrocyclization. The enzyme rebinds the remaining peptide in a different conformation and catalyzes macrocyclization of the N-terminal 8 residues.

Probable toxin that belongs to the MSDIN-like toxin family responsible for a large number of food poisoning cases and deaths. This chain is MSDIN-like toxin proprotein a, found in Amanita phalloides (Death cap).